Here is a 91-residue protein sequence, read N- to C-terminus: Large ribosomal subunit protein eL34 (91 aa).

The segment at 48 to 69 (RGRPVEMRKLPKTKKRPERPMP) is disordered.

It belongs to the eukaryotic ribosomal protein eL34 family.

This Pyrococcus horikoshii (strain ATCC 700860 / DSM 12428 / JCM 9974 / NBRC 100139 / OT-3) protein is Large ribosomal subunit protein eL34 (rpl34e).